A 424-amino-acid chain; its full sequence is GTPase Obg (424 aa).

Residues 1–158 enclose the Obg domain; it reads MFIDTAKIFV…RWIKLELKLL (158 aa). The region spanning 159-331 is the OBG-type G domain; sequence ADVGLIGFPN…LMKEAARLLS (173 aa). Residues 165-172, 190-194, 212-215, 282-285, and 312-314 each bind GTP; these read GFPNVGKS, FTTLK, DIPG, NKSD, and SAA. The Mg(2+) site is built by Ser172 and Thr192. The OCT domain occupies 345–424; it reads RFIEEEKRFT…LNDFEFDFLL (80 aa).

It belongs to the TRAFAC class OBG-HflX-like GTPase superfamily. OBG GTPase family. As to quaternary structure, monomer. Requires Mg(2+) as cofactor.

It localises to the cytoplasm. An essential GTPase which binds GTP, GDP and possibly (p)ppGpp with moderate affinity, with high nucleotide exchange rates and a fairly low GTP hydrolysis rate. Plays a role in control of the cell cycle, stress response, ribosome biogenesis and in those bacteria that undergo differentiation, in morphogenesis control. This chain is GTPase Obg, found in Clostridium botulinum (strain Okra / Type B1).